A 504-amino-acid chain; its full sequence is Patatin-like phospholipase domain-containing protein 2 (504 aa).

Over 1 to 8 the chain is Cytoplasmic; the sequence is MFPREKTW. A helical transmembrane segment spans residues 9-29; it reads NISFAGCGFLGVYYVGVASCL. Residues 10-179 enclose the PNPLA domain; the sequence is ISFAGCGFLG…SDNLPLYELK (170 aa). The GXGXXG motif lies at 14 to 19; it reads GCGFLG. Topologically, residues 30 to 42 are extracellular; the sequence is REHAPFLVANATH. Residue Asn-39 is glycosylated (N-linked (GlcNAc...) asparagine). The chain crosses the membrane as a helical span at residues 43–63; it reads IYGASAGALTATALVTGVCLG. The GXSXG motif lies at 45–49; that stretch reads GASAG. Ser-47 functions as the Nucleophile in the catalytic mechanism. Residues 64 to 137 lie on the Cytoplasmic side of the membrane; that stretch reads EAGAKFIEVS…IISHFNSKDE (74 aa). Lys-92 is covalently cross-linked (Glycyl lysine isopeptide (Lys-Gly) (interchain with G-Cter in ubiquitin)). The chain crosses the membrane as a helical span at residues 138–158; the sequence is LIQANVCSGFIPVYCGLIPPS. Residues 159-329 lie on the Extracellular side of the membrane; it reads LQGVRYVDGG…TTLSNMLPVR (171 aa). Asp-166 functions as the Proton acceptor in the catalytic mechanism. The DGA/G motif lies at 166 to 168; it reads DGG. Residues 330–350 traverse the membrane as a helical segment; that stretch reads LATAMMVPYTLPLESALSFTI. Over 351–504 the chain is Cytoplasmic; the sequence is RLLEWLPDVP…ARPVIGALGL (154 aa). Ser-372 is subject to Phosphoserine; in vitro. The residue at position 404 (Ser-404) is a Phosphoserine; by PKA and FAM20C. At Ser-428 the chain carries Phosphoserine. The segment at 463–492 is disordered; it reads APADPAPAPADPASPQHQLAGPAPLLSTPA.

Interacts with ABHD5; this association stimulates PNPLA2 triglyceride hydrolase activity. Interacts with SERPINF1; this interaction stimulates the phospholipase A2 activity of PNPLA2. Despite a colocalization in lipid droplets, it probably does not interact with PLIN. Interacts with PLIN5; prevents interaction with ABHD5. Interacts with FAF2. Post-translationally, phosphorylation at Ser-404 by PKA is increased during fasting and moderate intensity exercise, and moderately increases lipolytic activity. Phosphorylation at Ser-404 is increased upon beta-adrenergic stimulation. In terms of processing, ubiquitinated by PEX2 in response to reactive oxygen species (ROS), leading to its degradation. Ubiquitination is stimulated by LDAH. As to expression, highest expression in adipose tissue. Also detected in heart, skeletal muscle, and portions of the gastrointestinal tract. Detected in normal retina and retinoblastoma cells. Detected in retinal pigment epithelium and, at lower intensity, in the inner segments of photoreceptors and in the ganglion cell layer of the neural retina (at protein level).

It is found in the lipid droplet. The protein localises to the cell membrane. It localises to the cytoplasm. It carries out the reaction a triacylglycerol + H2O = a diacylglycerol + a fatty acid + H(+). The catalysed reaction is a triacylglycerol + H2O = a 1,2-diacylglycerol + a fatty acid + H(+). It catalyses the reaction a triacylglycerol + H2O = a 1,3-diacylglycerol + a fatty acid + H(+). The enzyme catalyses a triacyl-sn-glycerol + H2O = a 1,3-diacyl-sn-glycerol + a fatty acid + H(+). It carries out the reaction a triacyl-sn-glycerol + H2O = a 2,3-diacyl-sn-glycerol + a fatty acid + H(+). The catalysed reaction is a 1-acylglycerol + a 1,3-diacylglycerol = a triacylglycerol + glycerol. It catalyses the reaction a 1-acylglycerol + a 1,2-diacylglycerol = a triacylglycerol + glycerol. The enzyme catalyses 2 a 1-acylglycerol = a 1,2-diacylglycerol + glycerol. It carries out the reaction a triacylglycerol + all-trans-retinol = an all-trans-retinyl ester + a diacylglycerol. The catalysed reaction is 1,2-di-(9Z-octadecenoyl)-glycerol + (9Z)-octadecenoate + H(+) = 1,2,3-tri-(9Z-octadecenoyl)-glycerol + H2O. It catalyses the reaction 1,2,3-tri-(9Z-octadecenoyl)-glycerol + H2O = 1,3-di-(9Z-octadecenoyl)-glycerol + (9Z)-octadecenoate + H(+). The enzyme catalyses 1-(9Z-octadecenoyl)-glycerol + 1,3-di-(9Z-octadecenoyl)-glycerol = 1,2,3-tri-(9Z-octadecenoyl)-glycerol + glycerol. It carries out the reaction 1-(9Z-octadecenoyl)-glycerol + 1,2-di-(9Z-octadecenoyl)-glycerol = 1,2,3-tri-(9Z-octadecenoyl)-glycerol + glycerol. The catalysed reaction is 2 1-(9Z-octadecenoyl)-glycerol = 1,2-di-(9Z-octadecenoyl)-glycerol + glycerol. It catalyses the reaction 1,2,3-tri-(9Z-octadecenoyl)-glycerol + all-trans-retinol = all-trans-retinyl 9Z-octadecenoate + di-(9Z)-octadecenoylglycerol. The enzyme catalyses 1,2,3-tri-(9Z)-hexadecenoylglycerol + H2O = 1,3-di-(9Z)-hexadecenoylglycerol + (9Z)-hexadecenoate + H(+). It carries out the reaction 1,2,3-tri-(9Z,12Z)-octadecadienoylglycerol + H2O = 1,3-di-(9Z,12Z)-octadecadienoylglycerol + (9Z,12Z)-octadecadienoate + H(+). The catalysed reaction is 1,2,3-tri-(9Z,12Z,15Z)-octadecatrienoylglycerol + H2O = 1,3-di-(9Z,12Z,15Z)-octadecatrienoylglycerol + (9Z,12Z,15Z)-octadecatrienoate + H(+). It catalyses the reaction 1,3-di-(9Z)-octadecenoyl-2-hexadecanoylglycerol + H2O = 1,3-di-(9Z-octadecenoyl)-glycerol + hexadecanoate + H(+). The enzyme catalyses 1,2-di-(9Z)-octadecenoyl-3-hexadecanoyl-sn-glycerol + H2O = 1-(9Z)-octadecenoyl-3-hexadecanoyl-sn-glycerol + (9Z)-octadecenoate + H(+). It carries out the reaction 1-hexadecanoyl-2,3-di-(9Z)-octadecenoyl-sn-glycerol + H2O = 1-hexadecanoyl-3-(9Z)-octadecenoyl-sn-glycerol + (9Z)-octadecenoate + H(+). The catalysed reaction is 1,2,3-tri-(9Z-octadecenoyl)-glycerol + H2O = 2,3-di-(9Z)-octadecenoyl-sn-glycerol + (9Z)-octadecenoate + H(+). It catalyses the reaction 1,2,3-tri-(9Z)-hexadecenoylglycerol + H2O = 2,3-di-(9Z)-hexadecenoyl-sn-glycerol + (9Z)-hexadecenoate + H(+). The enzyme catalyses 1,2,3-tri-(9Z,12Z)-octadecadienoylglycerol + H2O = 2,3-di-(9Z,12Z)-octadecadienoyl-sn-glycerol + (9Z,12Z)-octadecadienoate + H(+). It carries out the reaction 1,2,3-tri-(9Z,12Z,15Z)-octadecatrienoylglycerol + H2O = 2,3-di-(9Z,12Z,15Z)-octadecatrienoyl-sn-glycerol + (9Z,12Z,15Z)-octadecatrienoate + H(+). The catalysed reaction is 1,3-di-(9Z)-octadecenoyl-2-hexadecanoylglycerol + H2O = 2-hexadecanoyl-3-(9Z)-octadecenoyl-sn-glycerol + (9Z)-octadecenoate + H(+). It catalyses the reaction 1-hexadecanoyl-2,3-di-(9Z)-octadecenoyl-sn-glycerol + H2O = 2,3-di-(9Z)-octadecenoyl-sn-glycerol + hexadecanoate + H(+). The enzyme catalyses 1,2-di-(9Z)-octadecenoyl-3-hexadecanoyl-sn-glycerol + H2O = 2-(9Z-octadecenoyl)-3-hexadecanoyl-sn-glycerol + (9Z)-octadecenoate + H(+). It carries out the reaction a 1,2-diacyl-sn-glycero-3-phosphocholine + H2O = a 1-acyl-sn-glycero-3-phosphocholine + a fatty acid + H(+). The catalysed reaction is 1,2,3-tri-(9Z-octadecenoyl)-glycerol + 9-hydroxy-octadecanoate = 9-(9Z-octadecenoyloxy)-octadecanoate + 2,3-di-(9Z)-octadecenoyl-sn-glycerol. It catalyses the reaction 1-hexadecanoyl-2,3-di-(9Z)-octadecenoyl-sn-glycerol + 9-hydroxy-octadecanoate = 9-hexadecanoyloxy-octadecanoate + 2,3-di-(9Z)-octadecenoyl-sn-glycerol. The enzyme catalyses 1,2,3-tri-(10Z)-heptadecenoylglycerol + 9-hydroxy-octadecanoate = 2,3-di-(10Z-heptadecenoyl)-sn-glycerol + 9-(10Z-heptadecenoyloxy)-octadecanoate. It carries out the reaction 1,2,3-tri-(9Z,12Z)-octadecadienoylglycerol + 9-hydroxy-octadecanoate = 2,3-di-(9Z,12Z)-octadecadienoyl-sn-glycerol + 9-(9Z,12Z-octadecadienoyloxy)-octadecanoate. The catalysed reaction is 1,2,3-tri-(9Z)-hexadecenoylglycerol + 9-hydroxy-octadecanoate = 2,3-di-(9Z)-hexadecenoyl-sn-glycerol + 9-(9Z-hexadecenoyloxy)-octadecanoate. It catalyses the reaction 9-hydroxy-octadecanoate + 1,2-di-(9Z-octadecenoyl)-sn-glycerol = 9-(9Z-octadecenoyloxy)-octadecanoate + 2-(9Z-octadecenoyl)-glycerol. The enzyme catalyses 1-hexadecanoyl-2,3-di-(9Z)-octadecenoyl-sn-glycerol + 9-hydroxy-octadecanoate = 1-hexadecanoyl-3-(9Z)-octadecenoyl-sn-glycerol + 9-(9Z-octadecenoyloxy)-octadecanoate. It participates in glycerolipid metabolism; triacylglycerol degradation. With respect to regulation, the triglyceride lipase activity is inhibited by BEL ((E)-6-(bromomethylene)-3-(1-naphthalenyl)-2H-tetrahydropyran-2-one), a suicide substrate inhibitor. No differences in the acylglycerol transacylase was detected in the presence or absence of ATP. Catalyzes the initial step in triglyceride hydrolysis in adipocyte and non-adipocyte lipid droplets. Exhibits a strong preference for the hydrolysis of long-chain fatty acid esters at the sn-2 position of the glycerol backbone and acts coordinately with LIPE/HLS and DGAT2 within the lipolytic cascade. Also possesses acylglycerol transacylase and phospholipase A2 activities. Transfers fatty acid from triglyceride to retinol, hydrolyzes retinylesters, and generates 1,3-diacylglycerol from triglycerides. Regulates adiposome size and may be involved in the degradation of adiposomes. Catalyzes the formation of an ester bond between hydroxy fatty acids and fatty acids derived from triglycerides or diglycerides to generate fatty acid esters of hydroxy fatty acids (FAHFAs) in adipocytes. Acts antagonistically with LDAH in regulation of cellular lipid stores. Inhibits LDAH-stimulated lipid droplet fusion. May play an important role in energy homeostasis. May play a role in the response of the organism to starvation, enhancing hydrolysis of triglycerides and providing free fatty acids to other tissues to be oxidized in situations of energy depletion. The protein is Patatin-like phospholipase domain-containing protein 2 of Homo sapiens (Human).